A 555-amino-acid chain; its full sequence is Bifunctional epoxide hydrolase 2 (555 aa).

Residues 1-224 (MALRAAVFDL…KVTGVQLLQT (224 aa)) form a phosphatase region. Mg(2+)-binding residues include aspartate 9 and aspartate 11. Lysine 43 carries the post-translational modification N6-acetyllysine. 123–124 (TN) serves as a coordination point for phosphate. Mg(2+) is bound at residue aspartate 185. N6-acetyllysine occurs at positions 191 and 215. An epoxide hydrolase region spans residues 235–555 (SALSHGYVLI…ARNPLVDSKL (321 aa)). The region spanning 259-531 (PAVCLCHGFP…CGHWTQIDKP (273 aa)) is the AB hydrolase-1 domain. Aspartate 335 (nucleophile) is an active-site residue. Serine 370 is subject to Phosphoserine. Tyrosine 383 lines the substrate pocket. Lysine 455 is subject to N6-succinyllysine. Residue tyrosine 466 is the Proton donor of the active site. Lysine 505 is subject to N6-succinyllysine. Cysteine 522 is lipidated: S-(15-deoxy-Delta12,14-prostaglandin J2-9-yl)cysteine. The Proton acceptor role is filled by histidine 524. The Microbody targeting signal motif lies at 553 to 555 (SKL). Position 554 is an N6-succinyllysine (lysine 554).

It belongs to the AB hydrolase superfamily. Epoxide hydrolase family. Homodimer. Requires Mg(2+) as cofactor. Post-translationally, the covalent modification of cysteine by 15-deoxy-Delta12,14-prostaglandin-J2 is autocatalytic and reversible. It may occur as an alternative to other cysteine modifications, such as S-nitrosylation and S-palmitoylation.

It localises to the cytoplasm. The protein localises to the peroxisome. It catalyses the reaction an epoxide + H2O = an ethanediol. The enzyme catalyses (9S,10S)-10-hydroxy-9-(phosphooxy)octadecanoate + H2O = (9S,10S)-9,10-dihydroxyoctadecanoate + phosphate. The catalysed reaction is (14R,15S)-epoxy-(5Z,8Z,11Z)-eicosatrienoate + H2O = (14R,15R)-dihydroxy-(5Z,8Z,11Z)-eicosatrienoate. Its activity is regulated as follows. Inhibited by 1-(1-acetylpiperidin-4-yl)-3-(4-(trifl uoromethoxy)phenyl)urea (TPAU), 1-cyclohexyl-3-dodecylurea (CDU), 12-(3-adamantan-1-yl-ureido)-dodecanoic acid (AUDA), 1-((3S, 5S, 7S)-adamantan-1-yl)-3-(5-(2-(2-ethoxyethoxy) ethoxy)pentyl)urea (AEPU), N-adamantyl-N[']-cyclohexyl urea (ACU), 4-(((1S, 4S)-4-(3-((3S, 5S, 7S)-adamantan-1-yl) ureido)cyclohexyl)oxy)benzoic acid (c-AUCB), 4-(((1R, 4R)-4-(3-((3S, 5S, 7S)-adamantan-1-yl)ureido)cyclohexyl)oxy)benzoic acid (t-AUCB), 4-(((1R, 4R)-4-(3-(4(trifluoromethoxy)phenyl)ureido)cyclohexyl)oxy)benzoic acid (t-TAUCB) and to a lesser extent by 8-(3-((3S, 5S, 7S)-adamantan-1-yl)ureido) octanoic acid (AUOA). In terms of biological role, bifunctional enzyme. The C-terminal domain has epoxide hydrolase activity and acts on epoxides (alkene oxides, oxiranes) and arene oxides. Plays a role in xenobiotic metabolism by degrading potentially toxic epoxides. Also determines steady-state levels of physiological mediators. The N-terminal domain has lipid phosphatase activity, with the highest activity towards threo-9,10-phosphonooxy-hydroxy-octadecanoic acid, followed by erythro-9,10-phosphonooxy-hydroxy-octadecanoic acid, 12-phosphonooxy-octadec-9Z-enoic acid and 12-phosphonooxy-octadec-9E-enoic acid. The sequence is that of Bifunctional epoxide hydrolase 2 (EPHX2) from Sus scrofa (Pig).